A 373-amino-acid chain; its full sequence is MSARRHIGNPEYLTRRIPQNPRYQHVKSRLDTGNSMTKYIEKLEEIKKNYRYKKDELFKRLKVTTFAQLVIQVASLSDQTLEVTAEEIQRLEDNDSATSEADAEIAAKTNGKGSPEEQSPSPVQFINSTGAGDSSRSTLQSVISGVGELDVDKGLVKKEEPNGKDKPYPDCPFLLLDVRDRDSYQQCHIVGAYSYPIATLSRTMNPYSNDILEYKNAHGKIIILYDEDERLASQAATTMCERGFENLFMLSGGLKVLAQKFPEGLVTGSLPASCQQALPFGSVRKRRGPKMPALPAENKWRFTPEDLKKIECYLEEDQGPADNPSRLNQNNSAGKDSKVAACRGGQNLPTSCPASHSSPRTLTSGHLQGKPWK.

A disordered region spans residues 91 to 137 (LEDNDSATSEADAEIAAKTNGKGSPEEQSPSPVQFINSTGAGDSSRS). A phosphoserine mark is found at serine 96 and serine 99. Threonine 109 is subject to Phosphothreonine. 2 positions are modified to phosphoserine: serine 114 and serine 121. A compositionally biased stretch (polar residues) spans 116–137 (EEQSPSPVQFINSTGAGDSSRS). The region spanning 169–266 (PDCPFLLLDV…LAQKFPEGLV (98 aa)) is the Rhodanese domain. The disordered stretch occupies residues 317 to 373 (DQGPADNPSRLNQNNSAGKDSKVAACRGGQNLPTSCPASHSSPRTLTSGHLQGKPWK). Polar residues predominate over residues 325–334 (SRLNQNNSAG). An Omega-N-methylarginine modification is found at arginine 343. The span at 347–366 (NLPTSCPASHSSPRTLTSGH) shows a compositional bias: polar residues.

It belongs to the CEP41 family. Found in a complex with TTLL6.

Its subcellular location is the cytoplasm. It is found in the cytoskeleton. The protein localises to the microtubule organizing center. The protein resides in the centrosome. It localises to the cell projection. Its subcellular location is the cilium. It is found in the cilium basal body. Required during ciliogenesis for tubulin glutamylation in cilium. Probably acts by participating in the transport of TTLL6, a tubulin polyglutamylase, between the basal body and the cilium. This Mus musculus (Mouse) protein is Centrosomal protein of 41 kDa (Cep41).